The chain runs to 247 residues: Cell division protein ZapD (247 aa).

This sequence belongs to the ZapD family. As to quaternary structure, interacts with FtsZ.

It localises to the cytoplasm. In terms of biological role, cell division factor that enhances FtsZ-ring assembly. Directly interacts with FtsZ and promotes bundling of FtsZ protofilaments, with a reduction in FtsZ GTPase activity. The chain is Cell division protein ZapD from Escherichia coli O139:H28 (strain E24377A / ETEC).